Consider the following 689-residue polypeptide: Protein asunder (689 aa).

Positions 521–550 form a coiled coil; the sequence is NGARLKLSKAKDQYRLLYRELEQLIQLNAT. Disordered stretches follow at residues 591 to 619 and 665 to 689; these read SPERLEPISSVGASGSSNSNSLLKASKRR and GTKDKDAVTTGASITPNVKEESVRS. Residues 599–614 are compositionally biased toward low complexity; it reads SSVGASGSSNSNSLLK. A Nuclear localization signal (NLS) motif is present at residues 613–619; the sequence is LKASKRR.

It belongs to the Integrator subunit 13 family. Belongs to the multiprotein complex Integrator, at least composed of IntS1, IntS2, IntS3, IntS4, omd/IntS5, IntS6, defl/IntS7, IntS8, IntS9, IntS10, IntS11, IntS12, asun/IntS13, IntS14 and IntS15. The core complex associates with protein phosphatase 2A subunits mts/PP2A and Pp2A-29B, to form the Integrator-PP2A (INTAC) complex. Phosphorylated.

Its subcellular location is the nucleus. The protein localises to the cytoplasm. It is found in the perinuclear region. Component of the integrator complex, a multiprotein complex that terminates RNA polymerase II (Pol II) transcription in the promoter-proximal region of genes. The integrator complex provides a quality checkpoint during transcription elongation by driving premature transcription termination of transcripts that are unfavorably configured for transcriptional elongation: the complex terminates transcription by (1) catalyzing dephosphorylation of the C-terminal domain (CTD) of Pol II subunit Polr2A/Rbp1 and Spt5, and (2) degrading the exiting nascent RNA transcript via endonuclease activity. The integrator complex is also involved in the 3'-end processing of the U7 snRNA, and also the spliceosomal snRNAs U1, U2, U4 and U5. The chain is Protein asunder (asun) from Drosophila sechellia (Fruit fly).